The chain runs to 679 residues: Recombination repair protein 1 (679 aa).

A disordered region spans residues 1-407 (MPRVKAVKKQ…TKKAKKAETK (407 aa)). The segment covering 45–55 (AKGKPRARKAT) has biased composition (basic residues). Residues 106–116 (ATAEAEPEPKV) are compositionally biased toward basic and acidic residues. Residues Thr-133 and Thr-140 each carry the phosphothreonine modification. Ser-142 is subject to Phosphoserine. Composition is skewed to basic and acidic residues over residues 179-189 (EPPKQRARKEA) and 203-214 (SKEKVQKAETAA). A Phosphoserine modification is found at Ser-258. The span at 312 to 347 (KKEGKEPAPGKKQKKSADKENGVVEEEAKPSTETKP) shows a compositional bias: basic and acidic residues. Residues 428 to 679 (KICSWNVAGL…HCPITIFFNI (252 aa)) form an AP endonuclease region. A Mg(2+)-binding site is contributed by Glu-461. Tyr-533 is an active-site residue. Mg(2+) is bound by residues Asp-572, Asn-574, and Asp-669. Residue Asp-572 is the Proton donor/acceptor of the active site.

Belongs to the DNA repair enzymes AP/ExoA family. In terms of assembly, interacts with the zeta DNA polymerase complex; interacts (via the N-terminus) with the accessory subunit PolZ2/Rev7 and also interacts with the catalytic component PolZ1, however the interaction with PolZ1 is likely via PolZ2. It depends on Mg(2+) as a cofactor. Mn(2+) serves as cofactor.

The protein localises to the nucleus. It carries out the reaction Exonucleolytic cleavage in the 3'- to 5'-direction to yield nucleoside 5'-phosphates.. In terms of biological role, plays a role in the cellular response to oxidative stress by promoting DNA repair mechanisms such as base excision repair and possibly homologous recombination repair. Functions as an apurinic/apyrimidinic (AP) endodeoxyribonuclease in the DNA base excision repair (BER) pathway of DNA lesions induced by oxidative and alkylating agents. Likely to initiate repair of AP sites in DNA by catalyzing hydrolytic incision of the phosphodiester backbone immediately adjacent to the damage, generating a single-strand break with 5'-deoxyribose phosphate and 3'-hydroxyl ends. Has a 3'-5' exoribonuclease activity on mismatched deoxyribonucleotides at the 3' termini of nicked or gapped DNA molecules during short-patch BER. Has apurinic endonuclease and double-stranded DNA 3'-exonuclease activities and carries out single-stranded DNA renaturation in a Mg(2+)-dependent manner. Activity is more efficient in purine-rich regions of dsDNA than in pyrimidine-rich regions. The polypeptide is Recombination repair protein 1 (Drosophila melanogaster (Fruit fly)).